The following is a 404-amino-acid chain: Argininosuccinate synthase (404 aa).

Residues 9-17 and A36 contribute to the ATP site; that span reads AYSGGLDTS. Position 87 (Y87) interacts with L-citrulline. G117 contributes to the ATP binding site. L-aspartate contacts are provided by T119, N123, and D124. An L-citrulline-binding site is contributed by N123. Residues R127, S176, and E261 each coordinate L-citrulline.

Belongs to the argininosuccinate synthase family. Type 1 subfamily. As to quaternary structure, homotetramer.

It is found in the cytoplasm. It carries out the reaction L-citrulline + L-aspartate + ATP = 2-(N(omega)-L-arginino)succinate + AMP + diphosphate + H(+). The protein operates within amino-acid biosynthesis; L-arginine biosynthesis; L-arginine from L-ornithine and carbamoyl phosphate: step 2/3. This Burkholderia pseudomallei (strain K96243) protein is Argininosuccinate synthase.